Consider the following 338-residue polypeptide: Protein FosB (338 aa).

Disordered stretches follow at residues 1 to 54 (MFQA…PGSF) and 80 to 179 (AQSQ…RREL). Positions 13–31 (SRCSSSPSAESQYLSSVDS) are enriched in polar residues. The residue at position 27 (serine 27) is a Phosphoserine. Residues 123-137 (PSTSTSTSGPVSARP) show a composition bias toward low complexity. The region spanning 155-218 (EEKRRVRRER…ERLEFVLVAH (64 aa)) is the bZIP domain. A basic motif region spans residues 157 to 182 (KRRVRRERNKLAAAKCRNRRRELTDR). Residues 183 to 211 (LQAETDQLEEEKAELESEIAELQKEKERL) form a leucine-zipper region. 2 disordered regions span residues 222–276 (CKIP…PPNL) and 315–338 (AGSQ…LLAL). A compositionally biased stretch (pro residues) spans 256–265 (LPPPPPPPLP). The span at 266-276 (FQSSRDAPPNL) shows a compositional bias: polar residues.

Belongs to the bZIP family. Fos subfamily. Heterodimer; binds to DNA as heterodimer. Component of an AP-1 transcription factor complex; composed of FOS-JUN heterodimers. As part of the AP-1 transcription factor complex, forms heterodimers with JUN, JUNB or JUND, thereby binding to the AP-1 consensus sequence and stimulating transcription. Phosphorylated; phosphorylation is induced by chronic electroconvulsive seizure (ECS) treatment. In terms of tissue distribution, expressed in brain. Expressed in pyramidal cells in CA1 and CA3, in the dentate gyrus and the nucleus accumbens (at protein level).

It is found in the nucleus. Heterodimerizes with proteins of the JUN family to form an AP-1 transcription factor complex, thereby enhancing their DNA binding activity to an AP-1 consensus sequence 5'-TGA[GC]TCA-3' and enhancing their transcriptional activity. Exhibits transactivation activity in vitro. As part of the AP-1 complex, facilitates enhancer selection together with cell-type-specific transcription factors by collaboratively binding to nucleosomal enhancers and recruiting the SWI/SNF (BAF) chromatin remodeling complex to establish accessible chromatin. Together with JUN, plays a role in activation-induced cell death of T cells by binding to the AP-1 promoter site of FASLG/CD95L, and inducing its transcription in response to activation of the TCR/CD3 signaling pathway. Involved in the display of nurturing behavior towards newborns. May play a role in neurogenesis in the hippocampus and in learning and memory-related tasks by regulating the expression of various genes involved in neurogenesis, depression and epilepsy. Implicated in behavioral responses related to morphine reward and spatial memory. This chain is Protein FosB, found in Rattus norvegicus (Rat).